The sequence spans 266 residues: Ras-like protein family member 12 (266 aa).

GTP is bound by residues 27-34 (GRRGAGKS), 74-78 (DTADL), and 134-137 (NKLD).

Belongs to the small GTPase superfamily. Ras family.

The enzyme catalyses GTP + H2O = GDP + phosphate + H(+). The polypeptide is Ras-like protein family member 12 (RASL12) (Homo sapiens (Human)).